A 479-amino-acid polypeptide reads, in one-letter code: UDP-glycosyltransferase 85A5 (479 aa).

Residues S301, 358–360, 375–383, and 397–400 each bind UDP-alpha-D-glucose; these read CPQ, HSGWNSTLE, and FAEQ.

The protein belongs to the UDP-glycosyltransferase family. As to expression, expressed in roots, shoots and leaves.

This Arabidopsis thaliana (Mouse-ear cress) protein is UDP-glycosyltransferase 85A5 (UGT85A5).